Consider the following 935-residue polypeptide: Isoleucine--tRNA ligase (935 aa).

Positions 58 to 68 (PYANGSIHVGH) match the 'HIGH' region motif. Position 558 (glutamate 558) interacts with L-isoleucyl-5'-AMP. The 'KMSKS' region motif lies at 599–603 (KMSKS). Residue lysine 602 coordinates ATP. 4 residues coordinate Zn(2+): cysteine 897, cysteine 900, cysteine 917, and cysteine 920.

This sequence belongs to the class-I aminoacyl-tRNA synthetase family. IleS type 1 subfamily. In terms of assembly, monomer. Requires Zn(2+) as cofactor.

It is found in the cytoplasm. It catalyses the reaction tRNA(Ile) + L-isoleucine + ATP = L-isoleucyl-tRNA(Ile) + AMP + diphosphate. Its function is as follows. Catalyzes the attachment of isoleucine to tRNA(Ile). As IleRS can inadvertently accommodate and process structurally similar amino acids such as valine, to avoid such errors it has two additional distinct tRNA(Ile)-dependent editing activities. One activity is designated as 'pretransfer' editing and involves the hydrolysis of activated Val-AMP. The other activity is designated 'posttransfer' editing and involves deacylation of mischarged Val-tRNA(Ile). The protein is Isoleucine--tRNA ligase of Francisella tularensis subsp. novicida (strain U112).